A 475-amino-acid chain; its full sequence is Ribulose bisphosphate carboxylase large chain (475 aa).

Residues 1–2 (MS) constitute a propeptide that is removed on maturation. Pro3 bears the N-acetylproline mark. An N6,N6,N6-trimethyllysine modification is found at Lys14. Substrate-binding residues include Asn123 and Thr173. The Proton acceptor role is filled by Lys175. Substrate is bound at residue Lys177. Mg(2+)-binding residues include Lys201, Asp203, and Glu204. Residue Lys201 is modified to N6-carboxylysine. The active-site Proton acceptor is His294. The substrate site is built by Arg295, His327, and Ser379.

Belongs to the RuBisCO large chain family. Type I subfamily. Heterohexadecamer of 8 large chains and 8 small chains; disulfide-linked. The disulfide link is formed within the large subunit homodimers. The cofactor is Mg(2+). In terms of processing, the disulfide bond which can form in the large chain dimeric partners within the hexadecamer appears to be associated with oxidative stress and protein turnover.

Its subcellular location is the plastid. The protein localises to the chloroplast. The enzyme catalyses 2 (2R)-3-phosphoglycerate + 2 H(+) = D-ribulose 1,5-bisphosphate + CO2 + H2O. It carries out the reaction D-ribulose 1,5-bisphosphate + O2 = 2-phosphoglycolate + (2R)-3-phosphoglycerate + 2 H(+). RuBisCO catalyzes two reactions: the carboxylation of D-ribulose 1,5-bisphosphate, the primary event in carbon dioxide fixation, as well as the oxidative fragmentation of the pentose substrate in the photorespiration process. Both reactions occur simultaneously and in competition at the same active site. This chain is Ribulose bisphosphate carboxylase large chain, found in Staurastrum punctulatum (Green alga).